The following is a 420-amino-acid chain: MFKVPVGLASRTRELMNSVTLNSLNNGKGFNMYLPGILRAFPKPVPSAITSPAIPKYRGESFQFRKLSCISSNYCSTTHQFLSSLKSSTSRLVGKRAFHSSRRAEIKFIFSSKSPKNGNKPFVKVYKVSPFFIIFATASIFTFILTSTIVVIPLIFHFFFPLLIMFFFFKQFKKWQKNIFYKDVLTSLPKTKLKITLPTMRSLQLQPMVQSWKEISSRMGIPNEFAKGLNVDLVKQEETRKQFLSFLQKRVLESFTKNELGIRSYFLGDSVEKWIKESYDLELDIDNCRSELRKFQTFIFSSVRYKLYLDSMKNLPLNPSKKLEGKKHIADVYVIILDESFPAIMFNGGAYSKADFFKILQESETSNSSKTLNTIIAIKSVNTLLSKHFVITTNGDSGEFFSKYNISKINDKNTEYTLKE.

Helical transmembrane passes span 125–145 (VYKVSPFFIIFATASIFTFIL) and 149–169 (IVVIPLIFHFFFPLLIMFFFF).

Associates with the mitochondrial ribosome.

It localises to the mitochondrion. The protein resides in the mitochondrion membrane. In terms of biological role, component of MIOREX complexes, large expressome-like assemblies of ribosomes with factors involved in all the steps of post-transcriptional gene expression. The polypeptide is MIOREX complex component 9 (Saccharomyces cerevisiae (strain ATCC 204508 / S288c) (Baker's yeast)).